The chain runs to 453 residues: tRNA modification GTPase MnmE (453 aa).

(6S)-5-formyl-5,6,7,8-tetrahydrofolate is bound by residues arginine 22, glutamate 79, and lysine 119. A TrmE-type G domain is found at 215–376 (GMKVVIAGRP…LQQHLKSLMG (162 aa)). Asparagine 225 contacts K(+). GTP contacts are provided by residues 225–230 (NAGKSS), 244–250 (TEIAGTT), 269–272 (DTAG), and 334–337 (NKAD). Residue serine 229 participates in Mg(2+) binding. K(+) is bound by residues threonine 244, isoleucine 246, and threonine 249. Threonine 250 lines the Mg(2+) pocket. Lysine 453 contributes to the (6S)-5-formyl-5,6,7,8-tetrahydrofolate binding site.

This sequence belongs to the TRAFAC class TrmE-Era-EngA-EngB-Septin-like GTPase superfamily. TrmE GTPase family. In terms of assembly, homodimer. Heterotetramer of two MnmE and two MnmG subunits. K(+) is required as a cofactor.

Its subcellular location is the cytoplasm. Its function is as follows. Exhibits a very high intrinsic GTPase hydrolysis rate. Involved in the addition of a carboxymethylaminomethyl (cmnm) group at the wobble position (U34) of certain tRNAs, forming tRNA-cmnm(5)s(2)U34. The chain is tRNA modification GTPase MnmE from Shewanella sediminis (strain HAW-EB3).